A 378-amino-acid polypeptide reads, in one-letter code: Anhydro-N-acetylmuramic acid kinase (378 aa).

Residue 22–29 (GTSLDGAD) coordinates ATP.

This sequence belongs to the anhydro-N-acetylmuramic acid kinase family.

The catalysed reaction is 1,6-anhydro-N-acetyl-beta-muramate + ATP + H2O = N-acetyl-D-muramate 6-phosphate + ADP + H(+). Its pathway is amino-sugar metabolism; 1,6-anhydro-N-acetylmuramate degradation. The protein operates within cell wall biogenesis; peptidoglycan recycling. In terms of biological role, catalyzes the specific phosphorylation of 1,6-anhydro-N-acetylmuramic acid (anhMurNAc) with the simultaneous cleavage of the 1,6-anhydro ring, generating MurNAc-6-P. Is required for the utilization of anhMurNAc either imported from the medium or derived from its own cell wall murein, and thus plays a role in cell wall recycling. This is Anhydro-N-acetylmuramic acid kinase from Bordetella petrii (strain ATCC BAA-461 / DSM 12804 / CCUG 43448).